A 265-amino-acid chain; its full sequence is Chalcone synthase (265 aa).

Cysteine 40 is an active-site residue.

The protein belongs to the thiolase-like superfamily. Chalcone/stilbene synthases family.

The enzyme catalyses (E)-4-coumaroyl-CoA + 3 malonyl-CoA + 3 H(+) = 2',4,4',6'-tetrahydroxychalcone + 3 CO2 + 4 CoA. Its pathway is secondary metabolite biosynthesis; flavonoid biosynthesis. Its function is as follows. The primary product of this enzyme is 4,2',4',6'-tetrahydroxychalcone (also termed naringenin-chalcone or chalcone) which can under specific conditions spontaneously isomerize into naringenin. The polypeptide is Chalcone synthase (CHSII) (Medicago sativa (Alfalfa)).